The primary structure comprises 297 residues: Probable endonuclease 4 (297 aa).

Positions 69, 110, 145, 179, 182, 214, 227, 229, and 259 each coordinate Zn(2+).

Belongs to the AP endonuclease 2 family. The cofactor is Zn(2+).

The catalysed reaction is Endonucleolytic cleavage to 5'-phosphooligonucleotide end-products.. Endonuclease IV plays a role in DNA repair. It cleaves phosphodiester bonds at apurinic or apyrimidinic (AP) sites, generating a 3'-hydroxyl group and a 5'-terminal sugar phosphate. This chain is Probable endonuclease 4, found in Bacillus licheniformis (strain ATCC 14580 / DSM 13 / JCM 2505 / CCUG 7422 / NBRC 12200 / NCIMB 9375 / NCTC 10341 / NRRL NRS-1264 / Gibson 46).